Here is a 92-residue protein sequence, read N- to C-terminus: RIIa domain-containing protein 1 (92 aa).

The RIIa domain occupies 43–77 (KEVELLISGFFREMFLKRPDNIPEFAADYFTDPRL).

This Bos taurus (Bovine) protein is RIIa domain-containing protein 1 (RIIAD1).